The following is a 453-amino-acid chain: MLLLLPWLFSLLWIENAQAQLEDEGNFYSENVSRILDNLLEGYDNRLRPGFGGAVTEVKTDIYVTSFGPVSDVEMEYTMDVFFRQTWTDERLKFKGPAEILSLNNLMVSKIWTPDTFFRNGKKSIAHNMTTPNKLFRLMHNGTILYTMRLTINADCPMRLVNFPMDGHACPLKFGSYAYPKSEIIYTWKKGPLYSVEVPEESSSLLQYDLIGQTVSSETIKSNTGEYVIMTVYFHLQRKMGYFMIQIYTPCIMTVILSQVSFWINKESVPARTVFGITTVLTMTTLSISARHSLPKVSYATAMDWFIAVCFAFVFSALIEFAAVNYFTNLQSQKAERQAQTAAKPPVAKSKTTESLEAEIVVHSDSKYHLKKRISSLTLPIVPSSEASKVLSRTPILPSTPVTPPLLLPAIGGTSKIDQYSRILFPVAFAGFNLVYWIVYLSKDTMEVSSTVE.

The N-terminal stretch at 1 to 19 (MLLLLPWLFSLLWIENAQA) is a signal peptide. Over 20–243 (QLEDEGNFYS…FHLQRKMGYF (224 aa)) the chain is Extracellular. Asn-31 carries an N-linked (GlcNAc...) asparagine glycan. Arg-84 lines the 4-aminobutanoate pocket. N-linked (GlcNAc...) asparagine glycans are attached at residues Asn-128 and Asn-141. Residue Thr-147 participates in 4-aminobutanoate binding. Cys-156 and Cys-170 form a disulfide bridge. A helical transmembrane segment spans residues 244 to 264 (MIQIYTPCIMTVILSQVSFWI). Over 265 to 270 (NKESVP) the chain is Cytoplasmic. The helical transmembrane segment at 271 to 290 (ARTVFGITTVLTMTTLSISA) threads the bilayer. Topologically, residues 291-304 (RHSLPKVSYATAMD) are extracellular. Residues 305–325 (WFIAVCFAFVFSALIEFAAVN) traverse the membrane as a helical segment. Topologically, residues 326 to 422 (YFTNLQSQKA…GTSKIDQYSR (97 aa)) are cytoplasmic. Ser-375 carries the phosphoserine modification. Position 403 is a phosphothreonine (Thr-403). The chain crosses the membrane as a helical span at residues 423–443 (ILFPVAFAGFNLVYWIVYLSK). Residues 444–453 (DTMEVSSTVE) lie on the Extracellular side of the membrane.

It belongs to the ligand-gated ion channel (TC 1.A.9) family. Gamma-aminobutyric acid receptor (TC 1.A.9.5) subfamily. GABRA6 sub-subfamily. As to quaternary structure, heteropentamer, formed by a combination of alpha (GABRA1-6), beta (GABRB1-3), gamma (GABRG1-3), delta (GABRD), epsilon (GABRE), rho (GABRR1-3), pi (GABRP) and theta (GABRQ) chains, each subunit exhibiting distinct physiological and pharmacological properties. Binds UBQLN1. As to expression, expressed in brain, in cerebellar granule cells.

The protein resides in the postsynaptic cell membrane. It is found in the cell membrane. It carries out the reaction chloride(in) = chloride(out). In terms of biological role, alpha subunit of the heteropentameric ligand-gated chloride channel gated by gamma-aminobutyric acid (GABA), a major inhibitory neurotransmitter in the brain. GABA-gated chloride channels, also named GABA(A) receptors (GABAAR), consist of five subunits arranged around a central pore and contain GABA active binding site(s) located at the alpha and beta subunit interface(s). When activated by GABA, GABAARs selectively allow the flow of chloride anions across the cell membrane down their electrochemical gradient. Alpha-6/GABRA6 subunits are found at both synaptic and extrasynaptic sites. Chloride influx into the postsynaptic neuron following GABAAR opening decreases the neuron ability to generate a new action potential, thereby reducing nerve transmission. Extrasynaptic alpha-6-containing receptors contribute to the tonic GABAergic inhibition. Alpha-6 subunits are also present on glutamatergic synapses. This Rattus norvegicus (Rat) protein is Gamma-aminobutyric acid receptor subunit alpha-6.